The following is a 374-amino-acid chain: Mitochondrial inner membrane protein oxa1-1 (374 aa).

Residues 77-97 traverse the membrane as a helical segment; sequence TINVYAGAPWWVSIILTTLGV. At 98 to 159 the chain is on the mitochondrial intermembrane side; it reads RLALTPVMIA…GIYLKHNVNP (62 aa). A helical transmembrane segment spans residues 160 to 180; that stretch reads FAIFILPLTQSAVFFSFFYAI. At 181–242 the chain is on the mitochondrial matrix side; that stretch reads RKMSRLSVDG…TIGNSTNWRT (62 aa). The chain crosses the membrane as a helical span at residues 243–263; it reads FFFLCCLLSPLLTAKLPAAIF. Topologically, residues 264 to 374 are mitochondrial intermembrane; it reads MYWIPSSLFN…SKKNSKKQSN (111 aa).

The protein belongs to the OXA1/ALB3/YidC family.

The protein resides in the mitochondrion inner membrane. Its function is as follows. Required for the insertion of integral membrane proteins into the mitochondrial inner membrane. Essential for the activity and assembly of cytochrome c oxidase. Not essential for viability, while oxa102 is essential. When both genes are deleted the cell is non-viable, suggesting that oxa101 act as a back-up for oxa102. The polypeptide is Mitochondrial inner membrane protein oxa1-1 (oxa101) (Schizosaccharomyces pombe (strain 972 / ATCC 24843) (Fission yeast)).